A 173-amino-acid polypeptide reads, in one-letter code: Small ribosomal subunit protein uS5 (173 aa).

The S5 DRBM domain maps to 17–80 (LREKMIAVNR…EEARRNMVKV (64 aa)).

This sequence belongs to the universal ribosomal protein uS5 family. Part of the 30S ribosomal subunit. Contacts proteins S4 and S8.

In terms of biological role, with S4 and S12 plays an important role in translational accuracy. Located at the back of the 30S subunit body where it stabilizes the conformation of the head with respect to the body. This Acidovorax sp. (strain JS42) protein is Small ribosomal subunit protein uS5.